The sequence spans 203 residues: MILSDADILDRLAEGDLVVEPLDDVDQQVQPASVDLRLGERFLEFQRTNIPCIHPTEADEVGDYVTETRVPEGEEFILHPGDFVLGTTTERVEIPPDLLATVQGRSSLGRLAIVIHATAGIVDPGYKGQITLELSNLGTAPVALTPGMRVSQLIFTELKSPAKRPYGVERGSKYQDQDGPQASRIGSDPEFHSDENQAAEHES.

DCTP is bound by residues 105–110 (RSSLGR), D123, 131–133 (TLE), Q152, Y166, K173, and Q177. E133 functions as the Proton donor/acceptor in the catalytic mechanism. Residues 164–203 (RPYGVERGSKYQDQDGPQASRIGSDPEFHSDENQAAEHES) form a disordered region. Residues 166-176 (YGVERGSKYQD) are compositionally biased toward basic and acidic residues. Residues 187-203 (SDPEFHSDENQAAEHES) are compositionally biased toward basic and acidic residues.

This sequence belongs to the dCTP deaminase family. As to quaternary structure, homotrimer.

It carries out the reaction dCTP + H2O + H(+) = dUTP + NH4(+). The protein operates within pyrimidine metabolism; dUMP biosynthesis; dUMP from dCTP (dUTP route): step 1/2. In terms of biological role, catalyzes the deamination of dCTP to dUTP. In Halorubrum lacusprofundi (strain ATCC 49239 / DSM 5036 / JCM 8891 / ACAM 34), this protein is dCTP deaminase.